The primary structure comprises 391 residues: MLTKKTDPMIVSMGPHHPSMHGVLRLVVSLDGENVIDCDPVLGYLHRGMEKIAENRSIVQYLPYVTRWDYLATMFTEAITVNAPEKLANIQVPKRASYIRVIMLELSRIASHLLWLGPFMADIGAQTPFFYIFREREMVYDLFESATGMRMMHNYFRIGGVAVDLPYGWLDKCLDFCDYFLPKIAEYENLITNNPIFRKRVEGIGIISREDAINWGLSGAMLRGSGVQWDLRKVDHYECYDELDWSIQWQSDGDCLARYLVRMGEMRESIKIIQQALKAIPGGPYENLEARRLNEGPKSEWNDFEYQFISKKSSPTFKLPKNEHYVRVEAPKGELGIYLIGDDTVFPWRCKIRPPGFVNLQILPQLVKGMKLADIMTILGSIDIIMGEVDR.

This sequence belongs to the complex I 49 kDa subunit family. In terms of assembly, NDH is composed of at least 16 different subunits, 5 of which are encoded in the nucleus.

Its subcellular location is the plastid. The protein resides in the chloroplast thylakoid membrane. It carries out the reaction a plastoquinone + NADH + (n+1) H(+)(in) = a plastoquinol + NAD(+) + n H(+)(out). The enzyme catalyses a plastoquinone + NADPH + (n+1) H(+)(in) = a plastoquinol + NADP(+) + n H(+)(out). Its function is as follows. NDH shuttles electrons from NAD(P)H:plastoquinone, via FMN and iron-sulfur (Fe-S) centers, to quinones in the photosynthetic chain and possibly in a chloroplast respiratory chain. The immediate electron acceptor for the enzyme in this species is believed to be plastoquinone. Couples the redox reaction to proton translocation, and thus conserves the redox energy in a proton gradient. This chain is NAD(P)H-quinone oxidoreductase subunit H, chloroplastic, found in Chaetosphaeridium globosum (Charophycean green alga).